Reading from the N-terminus, the 352-residue chain is Photosystem II D2 protein (352 aa).

A helical membrane pass occupies residues 40–60 (CAYLALGGWLTGTTFVTSWYT). A chlorophyll a-binding site is contributed by His117. The chain crosses the membrane as a helical span at residues 124–140 (GFMLRQFEIAQSVRLRP). Positions 129 and 142 each coordinate pheophytin a. A helical membrane pass occupies residues 152 to 165 (VFVSVFLIYPLGQS). His197 contacts chlorophyll a. A helical membrane pass occupies residues 207–227 (AALLCAIHGATVENTLFEDGD). The a plastoquinone site is built by His214 and Phe261. His214 contributes to the Fe cation binding site. His268 provides a ligand contact to Fe cation. A helical membrane pass occupies residues 278–294 (GLWMSALGVVGLALNLR).

This sequence belongs to the reaction center PufL/M/PsbA/D family. PSII is composed of 1 copy each of membrane proteins PsbA, PsbB, PsbC, PsbD, PsbE, PsbF, PsbH, PsbI, PsbJ, PsbK, PsbL, PsbM, PsbT, PsbY, PsbZ, Psb30/Ycf12, at least 3 peripheral proteins of the oxygen-evolving complex and a large number of cofactors. It forms dimeric complexes. The D1/D2 heterodimer binds P680, chlorophylls that are the primary electron donor of PSII, and subsequent electron acceptors. It shares a non-heme iron and each subunit binds pheophytin, quinone, additional chlorophylls, carotenoids and lipids. There is also a Cl(-1) ion associated with D1 and D2, which is required for oxygen evolution. The PSII complex binds additional chlorophylls, carotenoids and specific lipids. serves as cofactor.

It localises to the plastid. It is found in the chloroplast thylakoid membrane. It catalyses the reaction 2 a plastoquinone + 4 hnu + 2 H2O = 2 a plastoquinol + O2. Its function is as follows. Photosystem II (PSII) is a light-driven water:plastoquinone oxidoreductase that uses light energy to abstract electrons from H(2)O, generating O(2) and a proton gradient subsequently used for ATP formation. It consists of a core antenna complex that captures photons, and an electron transfer chain that converts photonic excitation into a charge separation. The D1/D2 (PsbA/PsbD) reaction center heterodimer binds P680, the primary electron donor of PSII as well as several subsequent electron acceptors. D2 is needed for assembly of a stable PSII complex. In Bigelowiella natans (Pedinomonas minutissima), this protein is Photosystem II D2 protein.